Here is a 205-residue protein sequence, read N- to C-terminus: Small heat shock protein hspG12 (205 aa).

The sHSP domain occupies 35 to 205 (KTIIDILPPM…YSNTIKININ (171 aa)). The segment at 99-147 (PSLLDTKEDEASIEEFDEDDIKPKSTETTSTLSNSKENKKDENKSKSTE) is disordered. Over residues 109–118 (ASIEEFDEDD) the composition is skewed to acidic residues. Over residues 134-147 (KENKKDENKSKSTE) the composition is skewed to basic and acidic residues.

Belongs to the small heat shock protein (HSP20) family.

The polypeptide is Small heat shock protein hspG12 (hspG12) (Dictyostelium discoideum (Social amoeba)).